The sequence spans 438 residues: Glutamyl-tRNA reductase (438 aa).

Substrate-binding positions include 49 to 52, Ser109, 114 to 116, and Gln120; these read TCNR and EGQ. Cys50 (nucleophile) is an active-site residue. 197-202 contacts NADP(+); the sequence is GAGKMS.

Belongs to the glutamyl-tRNA reductase family. In terms of assembly, homodimer.

It carries out the reaction (S)-4-amino-5-oxopentanoate + tRNA(Glu) + NADP(+) = L-glutamyl-tRNA(Glu) + NADPH + H(+). It participates in porphyrin-containing compound metabolism; protoporphyrin-IX biosynthesis; 5-aminolevulinate from L-glutamyl-tRNA(Glu): step 1/2. The protein operates within porphyrin-containing compound metabolism; chlorophyll biosynthesis. In terms of biological role, catalyzes the NADPH-dependent reduction of glutamyl-tRNA(Glu) to glutamate 1-semialdehyde (GSA). In Synechococcus elongatus (strain ATCC 33912 / PCC 7942 / FACHB-805) (Anacystis nidulans R2), this protein is Glutamyl-tRNA reductase.